Consider the following 346-residue polypeptide: [LysW]-lysine/[LysW]-ornithine hydrolase (346 aa).

Residue histidine 68 participates in Zn(2+) binding. Aspartate 70 is an active-site residue. Aspartate 92 contributes to the Zn(2+) binding site. The active-site Proton acceptor is glutamate 122. Residues glutamate 123, glutamate 146, and histidine 317 each contribute to the Zn(2+) site.

This sequence belongs to the peptidase M20A family. LysK subfamily. It depends on Zn(2+) as a cofactor. The cofactor is Co(2+).

Its subcellular location is the cytoplasm. The enzyme catalyses [amino-group carrier protein]-C-terminal-gamma-(L-lysyl)-L-glutamate + H2O = [amino-group carrier protein]-C-terminal-L-glutamate + L-lysine. It carries out the reaction [amino-group carrier protein]-C-terminal-gamma-(L-ornithyl)-L-glutamate + H2O = [amino-group carrier protein]-C-terminal-L-glutamate + L-ornithine. Its pathway is amino-acid biosynthesis; L-lysine biosynthesis via AAA pathway; L-lysine from L-alpha-aminoadipate (Thermus route): step 5/5. It functions in the pathway amino-acid biosynthesis; L-arginine biosynthesis. Its function is as follows. Catalyzes the release of L-lysine from [LysW]-gamma-L-lysine and the release of L-ornithine from [LysW]-L-ornithine. This chain is [LysW]-lysine/[LysW]-ornithine hydrolase, found in Saccharolobus islandicus (strain M.16.4 / Kamchatka #3) (Sulfolobus islandicus).